Here is a 310-residue protein sequence, read N- to C-terminus: Thymidine kinase (310 aa).

ATP is bound at residue 17–24 (GPFGIGKT). The Proton acceptor role is filled by Glu45. Residue Gln86 participates in substrate binding. Arg176 contacts ATP. Residue Arg182 participates in substrate binding.

This sequence belongs to the herpesviridae thymidine kinase family. As to quaternary structure, homodimer.

It carries out the reaction thymidine + ATP = dTMP + ADP + H(+). Functionally, catalyzes the transfer of the gamma-phospho group of ATP to thymidine to generate dTMP in the salvage pathway of pyrimidine synthesis. The dTMP serves as a substrate for DNA polymerase during viral DNA replication. Allows the virus to be reactivated and to grow in non-proliferative cells lacking a high concentration of phosphorylated nucleic acid precursors. The polypeptide is Thymidine kinase (Gallus gallus (Chicken)).